A 355-amino-acid polypeptide reads, in one-letter code: MSRFWNRRVRDLHPYVPGEQPKVADLLKLNTNESPHGPSPKVLAAIRDAASDDLRLYPDPTAAVLRDTIAARFGTTSDRVFVGNGSDEVLAHAFRALFHDDAPVLFSDVTYGFYPVYCGLFEQPFRHIPLNDDFAIDIDAYTGDCGGIIIANPNANTGIALPLEQIETLLKRHPDRTVIIDEAYVDFGAQSAIELTHRYDNLLVVQTLSKSYALAGLRVGFAIGSPELIEGLIRVKDSFNSYPLSRPAQAGAIAAIQDTDWLADITARVIASRDRLVPELQNLGFQVLPSCANFVLVHHPAHKAGAIAAALRERAILVRNLSTPRIQDWLRISIGTYEACIRLTDALRDILSPRS.

Lys-210 carries the N6-(pyridoxal phosphate)lysine modification.

It belongs to the class-II pyridoxal-phosphate-dependent aminotransferase family. Histidinol-phosphate aminotransferase subfamily. As to quaternary structure, homodimer. Pyridoxal 5'-phosphate serves as cofactor.

It catalyses the reaction L-histidinol phosphate + 2-oxoglutarate = 3-(imidazol-4-yl)-2-oxopropyl phosphate + L-glutamate. Its pathway is amino-acid biosynthesis; L-histidine biosynthesis; L-histidine from 5-phospho-alpha-D-ribose 1-diphosphate: step 7/9. This chain is Histidinol-phosphate aminotransferase 2, found in Gluconobacter oxydans (strain 621H) (Gluconobacter suboxydans).